The chain runs to 317 residues: Ribosomal RNA large subunit methyltransferase F (317 aa).

The protein belongs to the methyltransferase superfamily. METTL16/RlmF family.

The protein resides in the cytoplasm. The enzyme catalyses adenosine(1618) in 23S rRNA + S-adenosyl-L-methionine = N(6)-methyladenosine(1618) in 23S rRNA + S-adenosyl-L-homocysteine + H(+). Its function is as follows. Specifically methylates the adenine in position 1618 of 23S rRNA. This Pseudomonas putida (strain ATCC 700007 / DSM 6899 / JCM 31910 / BCRC 17059 / LMG 24140 / F1) protein is Ribosomal RNA large subunit methyltransferase F.